Reading from the N-terminus, the 181-residue chain is tRNA-splicing endonuclease (181 aa).

Catalysis depends on residues tyrosine 118, histidine 126, and lysine 157.

This sequence belongs to the tRNA-intron endonuclease family. Archaeal short subfamily. In terms of assembly, homotetramer; although the tetramer contains four active sites, only two participate in the cleavage. Therefore, it should be considered as a dimer of dimers.

The enzyme catalyses pretRNA = a 3'-half-tRNA molecule with a 5'-OH end + a 5'-half-tRNA molecule with a 2',3'-cyclic phosphate end + an intron with a 2',3'-cyclic phosphate and a 5'-hydroxyl terminus.. In terms of biological role, endonuclease that removes tRNA introns. Cleaves pre-tRNA at the 5'- and 3'-splice sites to release the intron. The products are an intron and two tRNA half-molecules bearing 2',3' cyclic phosphate and 5'-OH termini. Recognizes a pseudosymmetric substrate in which 2 bulged loops of 3 bases are separated by a stem of 4 bp. The sequence is that of tRNA-splicing endonuclease from Hyperthermus butylicus (strain DSM 5456 / JCM 9403 / PLM1-5).